Consider the following 369-residue polypeptide: Probable serine/threonine-protein kinase FMP48 (369 aa).

In terms of domain architecture, Protein kinase spans 2 to 369; the sequence is YTKLRSIQSG…EKPCLIQDGK (368 aa). ATP-binding positions include 8–16 and Lys31; that span reads IQSGTFSTV. The active-site Proton acceptor is the Asp133.

It belongs to the protein kinase superfamily. Ser/Thr protein kinase family.

Its subcellular location is the mitochondrion. It catalyses the reaction L-seryl-[protein] + ATP = O-phospho-L-seryl-[protein] + ADP + H(+). The enzyme catalyses L-threonyl-[protein] + ATP = O-phospho-L-threonyl-[protein] + ADP + H(+). This chain is Probable serine/threonine-protein kinase FMP48 (FMP48), found in Saccharomyces cerevisiae (strain ATCC 204508 / S288c) (Baker's yeast).